Consider the following 137-residue polypeptide: Small ribosomal subunit protein uS12 (137 aa).

The segment at 1–55 (MPTINQLVRKPRQSKIKKSDSPALNKGFNSKKKKFTDLNSPQKRGVCTRVGTMTP) is disordered. The residue at position 102 (aspartate 102) is a 3-methylthioaspartic acid. Residues 118-137 (SGVDGRRQGRSLYGTKKPKN) are disordered.

The protein belongs to the universal ribosomal protein uS12 family. Part of the 30S ribosomal subunit. Contacts proteins S8 and S17. May interact with IF1 in the 30S initiation complex.

Its function is as follows. With S4 and S5 plays an important role in translational accuracy. Interacts with and stabilizes bases of the 16S rRNA that are involved in tRNA selection in the A site and with the mRNA backbone. Located at the interface of the 30S and 50S subunits, it traverses the body of the 30S subunit contacting proteins on the other side and probably holding the rRNA structure together. The combined cluster of proteins S8, S12 and S17 appears to hold together the shoulder and platform of the 30S subunit. The sequence is that of Small ribosomal subunit protein uS12 from Staphylococcus aureus (strain Mu3 / ATCC 700698).